We begin with the raw amino-acid sequence, 117 residues long: MIPGMGMNPKQLKQMQRAMKQMGMDMKDLRGVEEVVIKLKKKEIIIKNPRVNVMDFMGQKTYQVTGKARECDLEAEVKIPDDDIELVMNQTGVSREEATRALQETGGDLAEAIMRLS.

An NAC-A/B domain is found at 9–77 (PKQLKQMQRA…ARECDLEAEV (69 aa)).

This sequence belongs to the NAC-alpha family. As to quaternary structure, homodimer. Interacts with the ribosome. Binds ribosomal RNA.

Functionally, contacts the emerging nascent chain on the ribosome. The chain is Nascent polypeptide-associated complex protein from Methanothermobacter marburgensis (strain ATCC BAA-927 / DSM 2133 / JCM 14651 / NBRC 100331 / OCM 82 / Marburg) (Methanobacterium thermoautotrophicum).